Reading from the N-terminus, the 504-residue chain is Lysine--tRNA ligase (504 aa).

Mg(2+) contacts are provided by Glu411 and Glu418.

The protein belongs to the class-II aminoacyl-tRNA synthetase family. In terms of assembly, homodimer. The cofactor is Mg(2+).

It is found in the cytoplasm. The enzyme catalyses tRNA(Lys) + L-lysine + ATP = L-lysyl-tRNA(Lys) + AMP + diphosphate. The sequence is that of Lysine--tRNA ligase from Clostridium botulinum (strain ATCC 19397 / Type A).